The primary structure comprises 365 residues: IgG receptor FcRn large subunit p51 (365 aa).

A signal peptide spans 1 to 23 (MGVPRPQPWALGLLLFLLPGSLG). The alpha-1 stretch occupies residues 24 to 110 (AESHLSLLYH…AFKALGGKGP (87 aa)). Residues 24–297 (AESHLSLLYH…VELESPAKSS (274 aa)) are Extracellular-facing. An alpha-2 region spans residues 111-200 (YTLQGLLGCE…ERGRGNLEWK (90 aa)). Intrachain disulfides connect cysteine 119–cysteine 182 and cysteine 221–cysteine 275. A glycan (N-linked (GlcNAc...) asparagine) is linked at asparagine 125. The segment at 201-290 (EPPSMRLKAR…GLAQPLRVEL (90 aa)) is alpha-3. Positions 202 to 289 (PPSMRLKARP…AGLAQPLRVE (88 aa)) constitute an Ig-like C1-type domain. The tract at residues 291-297 (ESPAKSS) is connecting peptide. The helical transmembrane segment at 298–321 (VLVVGIVIGVLLLTAAAVGGALLW) threads the bilayer. At 322–365 (RRMRSGLPAPWISLRGDDTGVLLPTPGEAQDADLKDVNVIPATA) the chain is on the cytoplasmic side. Serine 334 carries the post-translational modification Phosphoserine.

The protein belongs to the immunoglobulin superfamily. As to quaternary structure, fcRn complex consists of two subunits: p51, and p14 which is equivalent to beta-2-microglobulin. It forms an MHC class I-like heterodimer. Interacts with albumin/ALB; this interaction regulates ALB homeostasis. (Microbial infection) Interacts with Echovirus 6, Echovirus 11 and Echovirus 30 capsid protein VP1. In terms of tissue distribution, expressed in full-term placenta, heart, lung, liver, muscle, kidney, pancreas, and both fetal and adult small intestine.

The protein resides in the cell membrane. Its subcellular location is the endosome membrane. Cell surface receptor that transfers passive humoral immunity from the mother to the newborn. Binds to the Fc region of monomeric immunoglobulin gamma and mediates its selective uptake from milk. IgG in the milk is bound at the apical surface of the intestinal epithelium. The resultant FcRn-IgG complexes are transcytosed across the intestinal epithelium and IgG is released from FcRn into blood or tissue fluids. Throughout life, contributes to effective humoral immunity by recycling IgG and extending its half-life in the circulation. Mechanistically, monomeric IgG binding to FcRn in acidic endosomes of endothelial and hematopoietic cells recycles IgG to the cell surface where it is released into the circulation. In addition of IgG, regulates homeostasis of the other most abundant circulating protein albumin/ALB. In terms of biological role, (Microbial infection) Acts as an uncoating receptor for a panel of echoviruses including Echovirus 5, 6, 7, 9, 11, 13, 25 and 29. This chain is IgG receptor FcRn large subunit p51 (FCGRT), found in Homo sapiens (Human).